Here is a 158-residue protein sequence, read N- to C-terminus: Disulfide bond formation protein B (158 aa).

Residues 1-7 (MKNSRPV) are Cytoplasmic-facing. A helical transmembrane segment spans residues 8–24 (LFAVALASLLLLAVALY). Residues 25–42 (LQHVENMLPCPLCVIQRY) lie on the Periplasmic side of the membrane. Residues C34 and C37 are joined by a disulfide bond. A helical transmembrane segment spans residues 43–57 (AFAAIALICLVTAFR). Residues 58-63 (TEVTAR) lie on the Cytoplasmic side of the membrane. Residues 64–81 (IGAALAALASLAGAGVAG) traverse the membrane as a helical segment. The Periplasmic segment spans residues 82–136 (WHIYIKAHPTVSCGIDPLETSLNTIPTAKLLPFLLQADGLCTTEYAPIMGLSIPQ). C94 and C122 are oxidised to a cystine. The chain crosses the membrane as a helical span at residues 137–155 (WALVWFIVIALFLLHTAFR). Topologically, residues 156-158 (KKS) are cytoplasmic.

It belongs to the DsbB family.

The protein resides in the cell inner membrane. Functionally, required for disulfide bond formation in some periplasmic proteins. Acts by oxidizing the DsbA protein. The protein is Disulfide bond formation protein B of Herminiimonas arsenicoxydans.